Here is a 196-residue protein sequence, read N- to C-terminus: UPF0056 membrane protein BU449 (196 aa).

6 helical membrane-spanning segments follow: residues 8–28 (TILL…MTIL), 45–65 (IIAL…LIIL), 71–91 (TVSI…IFPS), 105–125 (FLVP…TLML), 134–154 (MFYL…ILLS), and 174–194 (MGLV…RAWF).

Belongs to the UPF0056 (MarC) family.

The protein resides in the cell membrane. This chain is UPF0056 membrane protein BU449, found in Buchnera aphidicola subsp. Acyrthosiphon pisum (strain APS) (Acyrthosiphon pisum symbiotic bacterium).